The chain runs to 296 residues: tRNA pseudouridine synthase B (296 aa).

D38 functions as the Nucleophile in the catalytic mechanism.

Belongs to the pseudouridine synthase TruB family. Type 1 subfamily.

It catalyses the reaction uridine(55) in tRNA = pseudouridine(55) in tRNA. Functionally, responsible for synthesis of pseudouridine from uracil-55 in the psi GC loop of transfer RNAs. This chain is tRNA pseudouridine synthase B, found in Ehrlichia ruminantium (strain Gardel).